Here is a 390-residue protein sequence, read N- to C-terminus: Phosphopentomutase (390 aa).

Residues Asp10, Asp282, His287, Asp323, His324, and His335 each coordinate Mn(2+).

Belongs to the phosphopentomutase family. The cofactor is Mn(2+).

The protein localises to the cytoplasm. The enzyme catalyses 2-deoxy-alpha-D-ribose 1-phosphate = 2-deoxy-D-ribose 5-phosphate. It carries out the reaction alpha-D-ribose 1-phosphate = D-ribose 5-phosphate. The protein operates within carbohydrate degradation; 2-deoxy-D-ribose 1-phosphate degradation; D-glyceraldehyde 3-phosphate and acetaldehyde from 2-deoxy-alpha-D-ribose 1-phosphate: step 1/2. Isomerase that catalyzes the conversion of deoxy-ribose 1-phosphate (dRib-1-P) and ribose 1-phosphate (Rib-1-P) to deoxy-ribose 5-phosphate (dRib-5-P) and ribose 5-phosphate (Rib-5-P), respectively. The polypeptide is Phosphopentomutase (Lachnoclostridium phytofermentans (strain ATCC 700394 / DSM 18823 / ISDg) (Clostridium phytofermentans)).